A 37-amino-acid chain; its full sequence is Mu-cyrtautoxin-As1a (37 aa).

4 disulfides stabilise this stretch: cysteine 1-cysteine 15, cysteine 8-cysteine 19, cysteine 14-cysteine 35, and cysteine 26-cysteine 31.

This sequence belongs to the neurotoxin 13 (insecticidal toxin ABC) family. 01 (Aps III) subfamily. As to expression, expressed by the venom gland.

Its subcellular location is the secreted. Its function is as follows. The recombinant mu-cyrtautoxin-As1a potently and voltage-independently blocks voltage-gated sodium channels (Nav) of insects. It acts by pluging the outer vestibule of the channel. It acts in combination with a weak (30%) voltage-independent block of insect voltage-gated calcium (Cav) channels (low-voltage and high-voltage channels). Tested on DUM neurons, it inhibits sodium currents with an IC(50) of 540 nM (and a Hill coefficient &gt;1, reflecting an incomplete block at higher concentrations). In vivo, it induces flaccid paralysis in adult Australian sheep blowfly Lucilia cuprina. It is both paralytic and lethal, when injected into lepidopteran larvae. It is a slower acting toxin, being lethal at 24 hours, but not paralytic at 1 hour post-injection. The chain is Mu-cyrtautoxin-As1a from Apomastus schlingeri (Trap-door spider).